Consider the following 310-residue polypeptide: MIIVTGGAGFIGSNIVKALNDKGITDILVVDNLKEGTKFVNLVDLNIADYMDKEDFLIQIMSGEELGDIEAVFHEGACSSTTEWDGKYMMDNNYQYSKELLHYCLEREIPFLYASSAATYGGRTSDFIESREYEKPLNVYGYSKFLFDEYVRQILPEANSQIVGFRYFNVYGPREGHKGSMASVAFHLNTQLNNGESPKLFEGSENFKRDFVYVGDVADVNLWFLESGKSGIFNLGTGRAESFQAVADATLAYHKKGSIEYIPFPDKLKGRYQAFTQADLTNLRNAGYDKPFKTVAEGVTEYMAWLNRDA.

Residues 10 to 11, 31 to 32, K38, K53, 75 to 79, and N92 contribute to the NADP(+) site; these read FI, DN, and EGACS. Catalysis depends on Y140, which acts as the Proton acceptor. K144 provides a ligand contact to NADP(+). A substrate-binding site is contributed by N169. 2 residues coordinate NADP(+): V170 and K178. K178 serves as the catalytic Proton acceptor. Substrate is bound by residues S180, H187, 201–204, R209, and Y272; that span reads FEGS.

Belongs to the NAD(P)-dependent epimerase/dehydratase family. HldD subfamily. As to quaternary structure, homopentamer. NADP(+) is required as a cofactor.

The catalysed reaction is ADP-D-glycero-beta-D-manno-heptose = ADP-L-glycero-beta-D-manno-heptose. The protein operates within nucleotide-sugar biosynthesis; ADP-L-glycero-beta-D-manno-heptose biosynthesis; ADP-L-glycero-beta-D-manno-heptose from D-glycero-beta-D-manno-heptose 7-phosphate: step 4/4. Catalyzes the interconversion between ADP-D-glycero-beta-D-manno-heptose and ADP-L-glycero-beta-D-manno-heptose via an epimerization at carbon 6 of the heptose. This is ADP-L-glycero-D-manno-heptose-6-epimerase from Salmonella arizonae (strain ATCC BAA-731 / CDC346-86 / RSK2980).